We begin with the raw amino-acid sequence, 102 residues long: Putative septation protein SpoVG 1 (102 aa).

The protein belongs to the SpoVG family.

Functionally, could be involved in septation. This chain is Putative septation protein SpoVG 1, found in Listeria innocua serovar 6a (strain ATCC BAA-680 / CLIP 11262).